A 198-amino-acid polypeptide reads, in one-letter code: SOSS complex subunit B2 (198 aa).

A DNA-binding region (OB) is located at residues isoleucine 26–tyrosine 89. The segment at glutamate 114–arginine 198 is disordered. Polar residues-rich tracts occupy residues serine 136–proline 151 and leucine 173–asparagine 188.

It belongs to the SOSS-B family. SOSS-B2 subfamily. In terms of assembly, component of the SOSS complex, composed of SOSS-B (SOSS-B1/NABP2 or SOSS-B2/NABP1), SOSS-A/INTS3 and SOSS-C/INIP. SOSS complexes containing SOSS-B1/NABP2 are more abundant than complexes containing SOSS-B2/NABP1. Ubiquitous with high expression in the thymus.

It is found in the nucleus. Component of the SOSS complex, a multiprotein complex that functions downstream of the MRN complex to promote DNA repair and G2/M checkpoint. In the SOSS complex, acts as a sensor of single-stranded DNA that binds to single-stranded DNA, in particular to polypyrimidines. The SOSS complex associates with DNA lesions and influences diverse endpoints in the cellular DNA damage response including cell-cycle checkpoint activation, recombinational repair and maintenance of genomic stability. Required for efficient homologous recombination-dependent repair of double-strand breaks (DSBs) and ATM-dependent signaling pathways. The protein is SOSS complex subunit B2 (Nabp1) of Mus musculus (Mouse).